The chain runs to 190 residues: Protein GrpE (190 aa).

Disordered stretches follow at residues 1–22 (MAEE…GQTI) and 170–190 (EEGE…KPQS). Positions 181–190 (ARVKVGKPQS) are enriched in basic residues.

It belongs to the GrpE family. Homodimer.

The protein resides in the cytoplasm. Its function is as follows. Participates actively in the response to hyperosmotic and heat shock by preventing the aggregation of stress-denatured proteins, in association with DnaK and GrpE. It is the nucleotide exchange factor for DnaK and may function as a thermosensor. Unfolded proteins bind initially to DnaJ; upon interaction with the DnaJ-bound protein, DnaK hydrolyzes its bound ATP, resulting in the formation of a stable complex. GrpE releases ADP from DnaK; ATP binding to DnaK triggers the release of the substrate protein, thus completing the reaction cycle. Several rounds of ATP-dependent interactions between DnaJ, DnaK and GrpE are required for fully efficient folding. The sequence is that of Protein GrpE from Leptospira biflexa serovar Patoc (strain Patoc 1 / Ames).